The primary structure comprises 278 residues: HTH-type transcriptional activator RhaS (278 aa).

The HTH araC/xylS-type domain occupies 174–272 (NQLMAWLEDH…NWSPRDIRQG (99 aa)). DNA-binding regions (H-T-H motif) lie at residues 191–212 (EAVAEQFSLSLRTLHRQLKQHT) and 239–262 (VTEIAYRCGFGDSNHFSTLFRREF).

As to quaternary structure, binds DNA as a dimer.

The protein resides in the cytoplasm. Functionally, activates expression of the rhaBAD and rhaT operons. The sequence is that of HTH-type transcriptional activator RhaS from Salmonella heidelberg (strain SL476).